Here is a 498-residue protein sequence, read N- to C-terminus: ATP synthase subunit beta, chloroplastic (498 aa).

At Thr-6 the chain carries Phosphothreonine. Ser-13 carries the phosphoserine modification. 172–179 (GGAGVGKT) contacts ATP.

It belongs to the ATPase alpha/beta chains family. As to quaternary structure, F-type ATPases have 2 components, CF(1) - the catalytic core - and CF(0) - the membrane proton channel. CF(1) has five subunits: alpha(3), beta(3), gamma(1), delta(1), epsilon(1). CF(0) has four main subunits: a(1), b(1), b'(1) and c(9-12).

It is found in the plastid. It localises to the chloroplast thylakoid membrane. It carries out the reaction ATP + H2O + 4 H(+)(in) = ADP + phosphate + 5 H(+)(out). Functionally, produces ATP from ADP in the presence of a proton gradient across the membrane. The catalytic sites are hosted primarily by the beta subunits. The sequence is that of ATP synthase subunit beta, chloroplastic from Arabis hirsuta (Hairy rock-cress).